Reading from the N-terminus, the 205-residue chain is Fibrillarin-like rRNA/tRNA 2'-O-methyltransferase (205 aa).

Residues 60 to 61 (ST), 76 to 77 (EF), 101 to 102 (DA), and 121 to 124 (DIAQ) each bind S-adenosyl-L-methionine.

This sequence belongs to the methyltransferase superfamily. Fibrillarin family. Interacts with nop5. Component of box C/D small ribonucleoprotein (sRNP) particles that contain rpl7ae, FlpA and nop5, plus a guide RNA.

Its function is as follows. Involved in pre-rRNA and tRNA processing. Utilizes the methyl donor S-adenosyl-L-methionine to catalyze the site-specific 2'-hydroxyl methylation of ribose moieties in rRNA and tRNA. Site specificity is provided by a guide RNA that base pairs with the substrate. Methylation occurs at a characteristic distance from the sequence involved in base pairing with the guide RNA. The protein is Fibrillarin-like rRNA/tRNA 2'-O-methyltransferase of Methanospirillum hungatei JF-1 (strain ATCC 27890 / DSM 864 / NBRC 100397 / JF-1).